Reading from the N-terminus, the 112-residue chain is Cornifelin homolog (112 aa).

This sequence belongs to the cornifelin family.

The protein is Cornifelin homolog (cnfn) of Danio rerio (Zebrafish).